The sequence spans 83 residues: Small ribosomal subunit protein bS16 (83 aa).

Belongs to the bacterial ribosomal protein bS16 family.

The sequence is that of Small ribosomal subunit protein bS16 from Borrelia turicatae (strain 91E135).